Here is a 411-residue protein sequence, read N- to C-terminus: MSISFDLTIDDTRDQLARHARASLEAKPSLIGMSREEMAAALIAAGVPERQVKMRISQLWHWLYVRGVSDFADMRNISKDLRAMLAQHFTIARPEVVEEQISQDGTRKWLFRFPPRGAGRPVEIESVYIPEEGRGTLCISSQVGCTLTCSFCHTGTQKLVRNLTSEEILAQLLTARDRLGDFPDKDTPDGAMVPAEGRKITNIVMMGMGEPLYNFEEVKKALLIASDGDGPSLSKRRITLSTSGVVPEIYRTGDEIGVMLAISLHAVRDELRDILVPINKKYPLAELIKACREYPGLSNAKRITFEYVMLKDINDSLDDAKLLVKLLQGIPAKINLIPFNPWPGTNYQCSDWEQIEKFADYVNAAGYASPIRTPRGRDILAACGQLKSESERLRKSERLALEAMMIAGHGE.

Catalysis depends on Glu125, which acts as the Proton acceptor. Residues 131-380 (EEGRGTLCIS…IRTPRGRDIL (250 aa)) form the Radical SAM core domain. Cys138 and Cys383 form a disulfide bridge. Residues Cys145, Cys149, and Cys152 each coordinate [4Fe-4S] cluster. Residues 209–210 (GE), Ser241, 263–265 (SLH), and Asn340 contribute to the S-adenosyl-L-methionine site. The S-methylcysteine intermediate role is filled by Cys383.

Belongs to the radical SAM superfamily. RlmN family. The cofactor is [4Fe-4S] cluster.

Its subcellular location is the cytoplasm. It carries out the reaction adenosine(2503) in 23S rRNA + 2 reduced [2Fe-2S]-[ferredoxin] + 2 S-adenosyl-L-methionine = 2-methyladenosine(2503) in 23S rRNA + 5'-deoxyadenosine + L-methionine + 2 oxidized [2Fe-2S]-[ferredoxin] + S-adenosyl-L-homocysteine. It catalyses the reaction adenosine(37) in tRNA + 2 reduced [2Fe-2S]-[ferredoxin] + 2 S-adenosyl-L-methionine = 2-methyladenosine(37) in tRNA + 5'-deoxyadenosine + L-methionine + 2 oxidized [2Fe-2S]-[ferredoxin] + S-adenosyl-L-homocysteine. Specifically methylates position 2 of adenine 2503 in 23S rRNA and position 2 of adenine 37 in tRNAs. m2A2503 modification seems to play a crucial role in the proofreading step occurring at the peptidyl transferase center and thus would serve to optimize ribosomal fidelity. The sequence is that of Dual-specificity RNA methyltransferase RlmN from Brucella suis biovar 1 (strain 1330).